The following is a 305-amino-acid chain: Methionyl-tRNA formyltransferase (305 aa).

111–114 (SLLP) provides a ligand contact to (6S)-5,6,7,8-tetrahydrofolate.

The protein belongs to the Fmt family.

It carries out the reaction L-methionyl-tRNA(fMet) + (6R)-10-formyltetrahydrofolate = N-formyl-L-methionyl-tRNA(fMet) + (6S)-5,6,7,8-tetrahydrofolate + H(+). In terms of biological role, attaches a formyl group to the free amino group of methionyl-tRNA(fMet). The formyl group appears to play a dual role in the initiator identity of N-formylmethionyl-tRNA by promoting its recognition by IF2 and preventing the misappropriation of this tRNA by the elongation apparatus. This chain is Methionyl-tRNA formyltransferase, found in Campylobacter jejuni subsp. jejuni serotype O:6 (strain 81116 / NCTC 11828).